The following is a 293-amino-acid chain: Glycine--tRNA ligase alpha subunit (293 aa).

It belongs to the class-II aminoacyl-tRNA synthetase family. As to quaternary structure, tetramer of two alpha and two beta subunits.

The protein localises to the cytoplasm. It carries out the reaction tRNA(Gly) + glycine + ATP = glycyl-tRNA(Gly) + AMP + diphosphate. In Wolinella succinogenes (strain ATCC 29543 / DSM 1740 / CCUG 13145 / JCM 31913 / LMG 7466 / NCTC 11488 / FDC 602W) (Vibrio succinogenes), this protein is Glycine--tRNA ligase alpha subunit.